The chain runs to 147 residues: Large ribosomal subunit protein bL9 (147 aa).

This sequence belongs to the bacterial ribosomal protein bL9 family.

Binds to the 23S rRNA. The polypeptide is Large ribosomal subunit protein bL9 (Campylobacter jejuni subsp. jejuni serotype O:23/36 (strain 81-176)).